We begin with the raw amino-acid sequence, 292 residues long: Ribosomal RNA small subunit methyltransferase A (292 aa).

N28, L30, G55, E76, D101, and N126 together coordinate S-adenosyl-L-methionine.

It belongs to the class I-like SAM-binding methyltransferase superfamily. rRNA adenine N(6)-methyltransferase family. RsmA subfamily.

Its subcellular location is the cytoplasm. It carries out the reaction adenosine(1518)/adenosine(1519) in 16S rRNA + 4 S-adenosyl-L-methionine = N(6)-dimethyladenosine(1518)/N(6)-dimethyladenosine(1519) in 16S rRNA + 4 S-adenosyl-L-homocysteine + 4 H(+). Its function is as follows. Specifically dimethylates two adjacent adenosines (A1518 and A1519) in the loop of a conserved hairpin near the 3'-end of 16S rRNA in the 30S particle. May play a critical role in biogenesis of 30S subunits. This chain is Ribosomal RNA small subunit methyltransferase A, found in Bacillus anthracis.